The following is a 478-amino-acid chain: PRAME family member 11 (478 aa).

One copy of the LRR 1; degenerate repeat lies at 99–126 (RWKLQVLDLQDVCENFWMVWSEAMAHGC). One copy of the LRR 2; degenerate repeat lies at 181–205 (HLCCKKLKILGMPFRNIRSILKMVN). One copy of the LRR 3; degenerate repeat lies at 206-232 (LDCIQEVEVNCKWILPILTQFTPYLGH). Residues 233-268 (LRNLQKLVLSHMDVSRYVSPEQKKEIVTQFTTQFLK) form an LRR 4; degenerate repeat. 5 LRR repeats span residues 269–294 (LRCL…LSCL), 295–326 (KTSL…SQLK), 327–347 (TLDL…QILL), 351–378 (AATL…ALSR), and 379–403 (CFEL…LLSH).

It belongs to the PRAME family.

The chain is PRAME family member 11 from Homo sapiens (Human).